The sequence spans 102 residues: NADH-quinone oxidoreductase subunit K 2 (102 aa).

3 helical membrane passes run 1 to 21 (MIVP…LGLV), 30 to 50 (IIMM…AFVG), and 65 to 85 (LMIM…VVYL).

It belongs to the complex I subunit 4L family. As to quaternary structure, NDH-1 is composed of 14 different subunits. Subunits NuoA, H, J, K, L, M, N constitute the membrane sector of the complex.

It is found in the cell inner membrane. The enzyme catalyses a quinone + NADH + 5 H(+)(in) = a quinol + NAD(+) + 4 H(+)(out). Its function is as follows. NDH-1 shuttles electrons from NADH, via FMN and iron-sulfur (Fe-S) centers, to quinones in the respiratory chain. The immediate electron acceptor for the enzyme in this species is believed to be ubiquinone. Couples the redox reaction to proton translocation (for every two electrons transferred, four hydrogen ions are translocated across the cytoplasmic membrane), and thus conserves the redox energy in a proton gradient. This chain is NADH-quinone oxidoreductase subunit K 2, found in Geotalea daltonii (strain DSM 22248 / JCM 15807 / FRC-32) (Geobacter daltonii).